The following is a 332-amino-acid chain: Ferredoxin--NADP reductase (332 aa).

Residues Glu36, Gln44, Tyr49, Val91, Phe124, and Thr327 each coordinate FAD.

This sequence belongs to the ferredoxin--NADP reductase type 2 family. In terms of assembly, homodimer. Requires FAD as cofactor.

It catalyses the reaction 2 reduced [2Fe-2S]-[ferredoxin] + NADP(+) + H(+) = 2 oxidized [2Fe-2S]-[ferredoxin] + NADPH. This Streptococcus thermophilus (strain CNRZ 1066) protein is Ferredoxin--NADP reductase.